Consider the following 351-residue polypeptide: Protein pelota homolog (351 aa).

Belongs to the eukaryotic release factor 1 family. Pelota subfamily. Monomer. The cofactor is a divalent metal cation.

The protein resides in the cytoplasm. Its function is as follows. May function in recognizing stalled ribosomes, interact with stem-loop structures in stalled mRNA molecules, and effect endonucleolytic cleavage of the mRNA. May play a role in the release non-functional ribosomes and degradation of damaged mRNAs. Has endoribonuclease activity. This chain is Protein pelota homolog, found in Methanosphaera stadtmanae (strain ATCC 43021 / DSM 3091 / JCM 11832 / MCB-3).